The chain runs to 391 residues: Glutamate 5-kinase (391 aa).

Lysine 17 serves as a coordination point for ATP. Substrate is bound by residues serine 57, aspartate 144, and asparagine 156. Residues 176–177 and 216–222 each bind ATP; these read SD and TGGMTTK. One can recognise a PUA domain in the interval 278–356; the sequence is QGQIVIDDGA…AWLAAEMGPA (79 aa). The segment at 370 to 391 is disordered; it reads SRRRKAEPSSRNQKSSGSRVTS. The span at 378–391 shows a compositional bias: polar residues; sequence SSRNQKSSGSRVTS.

This sequence belongs to the glutamate 5-kinase family.

The protein localises to the cytoplasm. It carries out the reaction L-glutamate + ATP = L-glutamyl 5-phosphate + ADP. It functions in the pathway amino-acid biosynthesis; L-proline biosynthesis; L-glutamate 5-semialdehyde from L-glutamate: step 1/2. Catalyzes the transfer of a phosphate group to glutamate to form L-glutamate 5-phosphate. In Cutibacterium acnes (strain DSM 16379 / KPA171202) (Propionibacterium acnes), this protein is Glutamate 5-kinase.